The sequence spans 482 residues: High affinity 3',5'-cyclic-AMP phosphodiesterase 7A (482 aa).

S84 is subject to Phosphoserine. Positions 136-458 (LDDDYNGQAK…ASWKGLQREQ (323 aa)) constitute a PDEase domain. H212 (proton donor) is an active-site residue. 4 residues coordinate a divalent metal cation: H216, H252, D253, and D362.

Belongs to the cyclic nucleotide phosphodiesterase family. PDE7 subfamily. Interacts with CBFA2T3. Requires a divalent metal cation as cofactor. Found at high levels in skeletal muscle and at low levels in a variety of tissues including brain and heart. It is expressed as well in two T-cell lines. As to expression, found abundantly in skeletal muscle and at low levels in heart.

Its subcellular location is the cytoplasm. The protein resides in the cytosol. It catalyses the reaction 3',5'-cyclic AMP + H2O = AMP + H(+). The protein operates within purine metabolism; 3',5'-cyclic AMP degradation; AMP from 3',5'-cyclic AMP: step 1/1. Insensitive to all selective PDE inhibitors. Hydrolyzes the second messenger cAMP, which is a key regulator of many important physiological processes. May have a role in muscle signal transduction. This chain is High affinity 3',5'-cyclic-AMP phosphodiesterase 7A, found in Homo sapiens (Human).